The sequence spans 360 residues: Phospho-N-acetylmuramoyl-pentapeptide-transferase (360 aa).

Residues 1–25 lie on the Periplasmic side of the membrane; it reads MLVWLAEHLVKYYSGFNVFSYLTFR. A helical membrane pass occupies residues 26 to 46; that stretch reads AIVSLLTALFISLWMGPRMIA. The Cytoplasmic portion of the chain corresponds to 47-71; sequence HLQKLSFGQVVRNDGPESHFSKRGT. A helical transmembrane segment spans residues 72-92; the sequence is PTMGGIMILTAIVISVLLWAY. Residue Pro93 is a topological domain, periplasmic. A helical membrane pass occupies residues 94-114; sequence SNPYVWCVLVVLVGYGIIGFV. Residues 115-131 lie on the Cytoplasmic side of the membrane; that stretch reads DDYRKVVRKDTKGLIAR. The helical transmembrane segment at 132 to 152 threads the bilayer; the sequence is WKYFWMSVIALGVAFALYLAG. The Periplasmic portion of the chain corresponds to 153–167; it reads KDTPATQLVVPFFKD. Residues 168 to 188 traverse the membrane as a helical segment; it reads VMPQLGLFYILLAYFVIVGTG. At 189–198 the chain is on the cytoplasmic side; that stretch reads NAVNLTDGLD. Residues 199–219 form a helical membrane-spanning segment; sequence GLAIMPTVFVAGGFALVAWAT. The Periplasmic portion of the chain corresponds to 220 to 235; that stretch reads GNMNFASYLHIPYLRH. The chain crosses the membrane as a helical span at residues 236-256; the sequence is AGELVIVCTAIVGAGLGFLWF. Residues 257–262 lie on the Cytoplasmic side of the membrane; that stretch reads NTYPAQ. A helical membrane pass occupies residues 263–283; the sequence is VFMGDVGSLALGGALGIIAVL. At 284–287 the chain is on the periplasmic side; the sequence is LRQE. The chain crosses the membrane as a helical span at residues 288–308; the sequence is FLLVIMGGVFVVETLSVILQV. At 309 to 337 the chain is on the cytoplasmic side; it reads GSFKLRGQRIFRMAPIHHHYELKGWPEPR. Residues 338 to 358 traverse the membrane as a helical segment; the sequence is VIVRFWIISLMLVLIGLATLK. The Periplasmic portion of the chain corresponds to 359-360; the sequence is VR.

The protein belongs to the glycosyltransferase 4 family. MraY subfamily. Mg(2+) serves as cofactor.

Its subcellular location is the cell inner membrane. It catalyses the reaction UDP-N-acetyl-alpha-D-muramoyl-L-alanyl-gamma-D-glutamyl-meso-2,6-diaminopimeloyl-D-alanyl-D-alanine + di-trans,octa-cis-undecaprenyl phosphate = di-trans,octa-cis-undecaprenyl diphospho-N-acetyl-alpha-D-muramoyl-L-alanyl-D-glutamyl-meso-2,6-diaminopimeloyl-D-alanyl-D-alanine + UMP. It participates in cell wall biogenesis; peptidoglycan biosynthesis. Catalyzes the initial step of the lipid cycle reactions in the biosynthesis of the cell wall peptidoglycan: transfers peptidoglycan precursor phospho-MurNAc-pentapeptide from UDP-MurNAc-pentapeptide onto the lipid carrier undecaprenyl phosphate, yielding undecaprenyl-pyrophosphoryl-MurNAc-pentapeptide, known as lipid I. In Escherichia coli O7:K1 (strain IAI39 / ExPEC), this protein is Phospho-N-acetylmuramoyl-pentapeptide-transferase.